Here is a 330-residue protein sequence, read N- to C-terminus: AH receptor-interacting protein (330 aa).

At serine 43 the chain carries Phosphoserine. The region spanning 54-146 (RVRGKPMELI…DLDALQQNPQ (93 aa)) is the PPIase FKBP-type domain. TPR repeat units lie at residues 179 to 212 (VPVI…LKNL), 231 to 264 (TPLL…YDDN), and 265 to 298 (VKAY…DPAM).

Interacts with RET in the pituitary gland; this interaction prevents the formation of the AIP-survivin complex.

It localises to the cytoplasm. May play a positive role in AHR-mediated (aromatic hydrocarbon receptor) signaling, possibly by influencing its receptivity for ligand and/or its nuclear targeting. In Bos taurus (Bovine), this protein is AH receptor-interacting protein (AIP).